Consider the following 118-residue polypeptide: MPRAKSSVVSRNRHRKILKLAKGYRGSRSKLFRVANQAVMKGLFYAYRDRRQKKRDFRKLWIARINAATRMNGLSYSRFINGLKKAGVEVNRKMLADLAVNDAKAFGQLVELAKSKLA.

It belongs to the bacterial ribosomal protein bL20 family.

Functionally, binds directly to 23S ribosomal RNA and is necessary for the in vitro assembly process of the 50S ribosomal subunit. It is not involved in the protein synthesizing functions of that subunit. The protein is Large ribosomal subunit protein bL20 of Desulforamulus reducens (strain ATCC BAA-1160 / DSM 100696 / MI-1) (Desulfotomaculum reducens).